A 1072-amino-acid polypeptide reads, in one-letter code: Translation initiation factor IF-2 (1072 aa).

Disordered stretches follow at residues 55-369 (ILDK…TGTA) and 426-452 (ELVD…VSKQ). 4 stretches are compositionally biased toward low complexity: residues 91–100 (AEASQAAEPA), 108–118 (EPATFAAEEPV), 126–179 (APRA…AEVA), and 186–212 (EAPQ…PSVQ). Residues 218-230 (PQPPPRSPVPPAV) are compositionally biased toward pro residues. The segment covering 231–245 (RTPSSTSSSATVVSR) has biased composition (low complexity). The segment covering 253–307 (QRGGPGGGRPGGPGGPGGRPGGPGGPGGRPGGPGGPGGRPGGPGGPGGRPGGPGG) has biased composition (gly residues). Positions 426 to 436 (ELVDVSKNKER) are enriched in basic and acidic residues. The tr-type G domain maps to 570–737 (PRPPVVAIMG…NLALQAEVLE (168 aa)). Residues 579–586 (GHVDHGKT) form a G1 region. 579–586 (GHVDHGKT) contributes to the GTP binding site. A G2 region spans residues 604-608 (GITQH). Residues 625–628 (DTPG) form a G3 region. Residues 625–629 (DTPGH) and 679–682 (NKMD) each bind GTP. The G4 stretch occupies residues 679–682 (NKMD). The tract at residues 715-717 (SAK) is G5.

This sequence belongs to the TRAFAC class translation factor GTPase superfamily. Classic translation factor GTPase family. IF-2 subfamily.

It localises to the cytoplasm. One of the essential components for the initiation of protein synthesis. Protects formylmethionyl-tRNA from spontaneous hydrolysis and promotes its binding to the 30S ribosomal subunits. Also involved in the hydrolysis of GTP during the formation of the 70S ribosomal complex. The chain is Translation initiation factor IF-2 from Myxococcus xanthus (strain DK1622).